Consider the following 271-residue polypeptide: MTTLEAFAKARSEGRAALIPYLTAGFPSREGFLQAVEEVLPYADLLEIGLPYSDPLGDGPVIQRASELALRKGMSVQGALELVREVRALTEKPLFLMTYLNPVLAWGPERFFGLFKQAGATGVILPDLPPDEDPGLVRLAQEIGLETVFLLAPTSTDARIATVVRHATGFVYAVSVTGVTGMRERLPEEVKDLVRRIKARTALPVAVGFGVSGKATAAQAAVADGVVVGSALVRALEEGRSLAPLLQEIRQGLQRLEANPGLKESSKKPLS.

Residues Glu47 and Asp58 each act as proton acceptor in the active site.

Belongs to the TrpA family. In terms of assembly, tetramer of two alpha and two beta chains.

It carries out the reaction (1S,2R)-1-C-(indol-3-yl)glycerol 3-phosphate + L-serine = D-glyceraldehyde 3-phosphate + L-tryptophan + H2O. It functions in the pathway amino-acid biosynthesis; L-tryptophan biosynthesis; L-tryptophan from chorismate: step 5/5. The alpha subunit is responsible for the aldol cleavage of indoleglycerol phosphate to indole and glyceraldehyde 3-phosphate. The polypeptide is Tryptophan synthase alpha chain (Thermus thermophilus (strain ATCC BAA-163 / DSM 7039 / HB27)).